Reading from the N-terminus, the 309-residue chain is Sulfate adenylyltransferase subunit 2 (309 aa).

Belongs to the PAPS reductase family. CysD subfamily. In terms of assembly, heterodimer composed of CysD, the smaller subunit, and CysN.

It carries out the reaction sulfate + ATP + H(+) = adenosine 5'-phosphosulfate + diphosphate. Its pathway is sulfur metabolism; hydrogen sulfide biosynthesis; sulfite from sulfate: step 1/3. In terms of biological role, with CysN forms the ATP sulfurylase (ATPS) that catalyzes the adenylation of sulfate producing adenosine 5'-phosphosulfate (APS) and diphosphate, the first enzymatic step in sulfur assimilation pathway. APS synthesis involves the formation of a high-energy phosphoric-sulfuric acid anhydride bond driven by GTP hydrolysis by CysN coupled to ATP hydrolysis by CysD. The protein is Sulfate adenylyltransferase subunit 2 of Methylorubrum populi (strain ATCC BAA-705 / NCIMB 13946 / BJ001) (Methylobacterium populi).